A 365-amino-acid chain; its full sequence is C-X-C chemokine receptor type 3 (365 aa).

Residues 1–57 (MVPEMSERQVFQASELTYLLENCSSSYDYAENESDSCCASPPCPQDISLNFDRAFLP) lie on the Extracellular side of the membrane. N-linked (GlcNAc...) asparagine glycosylation occurs at Asn22. Sulfotyrosine occurs at positions 27 and 29. Residue Asn32 is glycosylated (N-linked (GlcNAc...) asparagine). The helical transmembrane segment at 58–78 (ALYGLLFLLGLLGNGAVAAVL) threads the bilayer. Over 79 to 88 (CSQRAARTST) the chain is Cytoplasmic. A helical transmembrane segment spans residues 89 to 109 (DTFLLHLAVADMLLVLTLPLW). Residues 110–126 (RVDTAVQWVFGSGLCKV) are Extracellular-facing. Residues Cys124 and Cys203 are joined by a disulfide bond. The helical transmembrane segment at 127–147 (AGALFNINFYAGALLLACISF) threads the bilayer. Residues 148–169 (DRYLSIVHATQPYRRGPPARVT) lie on the Cytoplasmic side of the membrane. Residues 170 to 190 (LTCVVVWGLCLFFAIPDFIFL) traverse the membrane as a helical segment. Over 191–223 (SANRDERLNAMHCRYNFPQVGRTALRGLQLVAG) the chain is Extracellular. A helical transmembrane segment spans residues 224-244 (FLLPLLVMAYCYARILAVLLV). Residues 245–256 (SRGQRRQRRMRL) are Cytoplasmic-facing. A helical membrane pass occupies residues 257–277 (VVVVVVAFALCWTPYHLVVLV). Residues 278–301 (DTLMDLGALDRNCGRESRVDVAKS) are Extracellular-facing. Residues 302–322 (VTSGLGYMHCCLNPLLYAFVG) form a helical membrane-spanning segment. The Cytoplasmic segment spans residues 323–365 (VKFRERMWMLLLRLGCPDHRGHQRHPTLSRRESSWSETPSTPR). The segment at 342–365 (RGHQRHPTLSRRESSWSETPSTPR) is disordered.

This sequence belongs to the G-protein coupled receptor 1 family. Homomer. Forms heteromers with ACKR4. Interacts with PF4/CXCL4. Post-translationally, sulfation on Tyr-27 and Tyr-29 is essential for CXCL10 binding. N-glycosylated.

The protein resides in the cell membrane. Its function is as follows. Receptor for the C-X-C chemokine CXCL9, CXCL10 and CXCL11 and mediates the proliferation, survival and angiogenic activity of mesangial cells through a heterotrimeric G-protein signaling pathway. Probably promotes cell chemotaxis response. Binds to CCL21. Upon activation by PF4, induces activated T-lymphocytes migration mediated via downstream Ras/extracellular signal-regulated kinase (ERK) signaling. This is C-X-C chemokine receptor type 3 (CXCR3) from Canis lupus familiaris (Dog).